We begin with the raw amino-acid sequence, 145 residues long: LIRP (145 aa).

A signal peptide (or 22) is located at residues 1-19; sequence MWKLCLRLLAVLAVCLSTA. Propeptides lie at residues 20–33 and 117–122; these read TQAQ…SPKR and FRRRTR. 3 disulfide bridges follow: Cys44/Cys129, Cys56/Cys142, and Cys128/Cys133.

This sequence belongs to the insulin family. In terms of assembly, heterodimer of a B chain and an A chain linked by two disulfide bonds.

It localises to the secreted. This chain is LIRP, found in Locusta migratoria (Migratory locust).